A 209-amino-acid chain; its full sequence is Ras-like protein (209 aa).

10-17 (GGGLVGKS) is a GTP binding site. The short motif at 55-63 (YDPTVEDSR) is the Effector region element. At Thr58 the chain carries Phosphothreonine. GTP is bound by residues 79–83 (DTAGQ) and 140–143 (NKAD). Cys206 carries the post-translational modification Cysteine methyl ester. Cys206 is lipidated: S-geranylgeranyl cysteine. Positions 207-209 (LII) are cleaved as a propeptide — removed in mature form.

It belongs to the small GTPase superfamily. Ras family. Phosphorylated in the presence of insulin.

The protein resides in the cell membrane. It carries out the reaction GTP + H2O = GDP + phosphate + H(+). Alternates between an inactive form bound to GDP and an active form bound to GTP. Activated by a guanine nucleotide-exchange factor (GEF) and inactivated by a GTPase-activating protein (GAP). In terms of biological role, this protein is activated by the insulin/insulin (insulin-like)-receptor system. This transition enables the ras protein to interact with the lectin-receptor/lectin complex, a process which ultimately lead to an initiation of an intra-cellular signal-transduction chain. The chain is Ras-like protein from Geodia cydonium (Sponge).